The sequence spans 803 residues: Ribonucleoside-diphosphate reductase large chain (803 aa).

In terms of domain architecture, ATP-cone spans 1–91 (MYVVNRKGEE…TSNLHKNTSS (91 aa)). Residues 5 to 6 (NR), 11 to 17 (EPVSFDQ), Thr52, and Asp56 contribute to the ATP site. A GDP-binding site is contributed by Ser215. A disulfide bridge connects residues Cys216 and Cys442. DTTP is bound by residues 224 to 226 (DSI), Lys241, Arg254, and 261 to 262 (RG). Asn425 serves as a coordination point for GDP. The active-site Proton acceptor is the Asn425. The active-site Cysteine radical intermediate is the Cys427. GDP-binding positions include Glu429 and 604–607 (TAST). Glu429 acts as the Proton acceptor in catalysis.

The protein belongs to the ribonucleoside diphosphate reductase large chain family. As to quaternary structure, heterodimer of a large and a small subunit.

The enzyme catalyses a 2'-deoxyribonucleoside 5'-diphosphate + [thioredoxin]-disulfide + H2O = a ribonucleoside 5'-diphosphate + [thioredoxin]-dithiol. Under complex allosteric control mediated by deoxynucleoside triphosphates and ATP binding to separate specificity and activation sites on the large subunit. The type of nucleotide bound at the specificity site determines substrate preference. It seems probable that ATP makes the enzyme reduce CDP and UDP, dGTP favors ADP reduction and dTTP favors GDP reduction. Stimulated by ATP and inhibited by dATP binding to the activity site. Functionally, provides the precursors necessary for DNA synthesis. Catalyzes the biosynthesis of deoxyribonucleotides from the corresponding ribonucleotides. The sequence is that of Ribonucleoside-diphosphate reductase large chain (RNR1) from Cryptosporidium parvum.